Here is a 196-residue protein sequence, read N- to C-terminus: Baseplate wedge protein gp53 (196 aa).

In terms of assembly, part of the baseplate macromolecular complex which consists of gp5, gp5.4, gp27 (central spike complex); gp6, gp25, gp53 (inner baseplate); gp7, gp8 (intermediate baseplate); gp9, gp10, gp11, gp12 (peripheral); gp48 and gp54 (proximal region of the tail tube). Interacts with gp25 and with the (gp6)2-gp7 heterotrimeric molecule.

The protein localises to the virion. Functionally, baseplate protein that is located next to the tail tube (inner baseplate). Involved in the tail assembly. Involved in the tail assembly. The polypeptide is Baseplate wedge protein gp53 (53) (Enterobacteria phage T4 (Bacteriophage T4)).